Consider the following 172-residue polypeptide: Large ribosomal subunit protein uL10 (172 aa).

Belongs to the universal ribosomal protein uL10 family. As to quaternary structure, part of the ribosomal stalk of the 50S ribosomal subunit. The N-terminus interacts with L11 and the large rRNA to form the base of the stalk. The C-terminus forms an elongated spine to which L12 dimers bind in a sequential fashion forming a multimeric L10(L12)X complex.

Its function is as follows. Forms part of the ribosomal stalk, playing a central role in the interaction of the ribosome with GTP-bound translation factors. The polypeptide is Large ribosomal subunit protein uL10 (Mesorhizobium japonicum (strain LMG 29417 / CECT 9101 / MAFF 303099) (Mesorhizobium loti (strain MAFF 303099))).